A 66-amino-acid chain; its full sequence is Alpha-like toxin BmK-M7 (66 aa).

One can recognise an LCN-type CS-alpha/beta domain in the interval 2-64 (RDGYIALPHN…VPIRVPGRCH (63 aa)). Cystine bridges form between C12-C63, C16-C36, C22-C46, and C26-C48.

The protein belongs to the long (4 C-C) scorpion toxin superfamily. Sodium channel inhibitor family. Alpha subfamily. As to expression, expressed by the venom gland.

The protein localises to the secreted. In terms of biological role, alpha toxins bind voltage-independently at site-3 of sodium channels (Nav) and inhibit the inactivation of the activated channels, thereby blocking neuronal transmission. This toxin is active on both mammals and insects. It can be considered as a cardiotoxin, as it can bind to human cardiac sodium channel and modify its normal properties. This Olivierus martensii (Manchurian scorpion) protein is Alpha-like toxin BmK-M7.